A 625-amino-acid polypeptide reads, in one-letter code: Serine/threonine-protein kinase PknB (625 aa).

Residues 1-331 are Cytoplasmic-facing; it reads MTTPQHLSDR…KQRSTSVARW (331 aa). The 264-residue stretch at 11–274 folds into the Protein kinase domain; sequence YELGEILGFG…TAAEMRADLI (264 aa). ATP contacts are provided by residues 17 to 25, K40, and 93 to 95; these read LGFGGMSEV and EYV. D138 functions as the Proton acceptor in the catalytic mechanism. ATP is bound by residues 140–143 and D156; that span reads KPAN. 2 residues coordinate Mg(2+): N143 and D156. A Phosphoserine; by autocatalysis modification is found at S169. T171, T173, and T294 each carry phosphothreonine; by autocatalysis. At S295 the chain carries Phosphoserine; by autocatalysis. Residues 302–321 form a disordered region; it reads ADRAGAATQDMPVPRPAGYS. Phosphothreonine; by autocatalysis is present on T309. A helical membrane pass occupies residues 332–352; it reads LIAVAVLAVLTVVVTVAINMV. The Extracellular portion of the chain corresponds to 353–625; the sequence is GGNPRNVQVP…DAKITLSFAA (273 aa). PASTA domains follow at residues 355–421, 422–489, 490–556, and 557–625; these read NPRN…NVST, GPEQ…VVGA, GPED…RVSK, and GNQF…SFAA. A disordered region spans residues 591–612; it reads DVRDSGQRTNAVVTQSPSAGTP. The segment covering 597–611 has biased composition (polar residues); it reads QRTNAVVTQSPSAGT.

This sequence belongs to the protein kinase superfamily. Ser/Thr protein kinase family. In terms of assembly, homodimer. Autophosphorylated. Dephosphorylated by PstP.

It is found in the cell membrane. It catalyses the reaction L-seryl-[protein] + ATP = O-phospho-L-seryl-[protein] + ADP + H(+). The enzyme catalyses L-threonyl-[protein] + ATP = O-phospho-L-threonyl-[protein] + ADP + H(+). Its activity is regulated as follows. By K-252a. Functionally, protein kinase that regulates many aspects of mycobacterial physiology. Is a key component of a signal transduction pathway that regulates cell growth, cell shape and cell division via phosphorylation of target proteins. Probably phosphorylates RseA. This Mycolicibacterium smegmatis (strain ATCC 700084 / mc(2)155) (Mycobacterium smegmatis) protein is Serine/threonine-protein kinase PknB (pknB).